Reading from the N-terminus, the 312-residue chain is Urease accessory protein UreD (312 aa).

Over residues 1 to 15 the composition is skewed to basic and acidic residues; sequence MLAEQFTDKNKHAEQ. A disordered region spans residues 1-24; the sequence is MLAEQFTDKNKHAEQELSPGSSAV.

This sequence belongs to the UreD family. As to quaternary structure, ureD, UreF and UreG form a complex that acts as a GTP-hydrolysis-dependent molecular chaperone, activating the urease apoprotein by helping to assemble the nickel containing metallocenter of UreC. The UreE protein probably delivers the nickel.

It localises to the cytoplasm. In terms of biological role, required for maturation of urease via the functional incorporation of the urease nickel metallocenter. This is Urease accessory protein UreD from Hahella chejuensis (strain KCTC 2396).